The sequence spans 97 residues: DNA-directed RNA polymerase subunit omega (97 aa).

Belongs to the RNA polymerase subunit omega family. As to quaternary structure, the RNAP catalytic core consists of 2 alpha, 1 beta, 1 beta' and 1 omega subunit. When a sigma factor is associated with the core the holoenzyme is formed, which can initiate transcription.

The enzyme catalyses RNA(n) + a ribonucleoside 5'-triphosphate = RNA(n+1) + diphosphate. Functionally, promotes RNA polymerase assembly. Latches the N- and C-terminal regions of the beta' subunit thereby facilitating its interaction with the beta and alpha subunits. This is DNA-directed RNA polymerase subunit omega from Corynebacterium glutamicum (strain ATCC 13032 / DSM 20300 / JCM 1318 / BCRC 11384 / CCUG 27702 / LMG 3730 / NBRC 12168 / NCIMB 10025 / NRRL B-2784 / 534).